The sequence spans 474 residues: tRNA-2-methylthio-N(6)-dimethylallyladenosine synthase (474 aa).

The MTTase N-terminal domain maps to 3 to 120 (QKLHIKTWGC…LPEMINQIRG (118 aa)). [4Fe-4S] cluster contacts are provided by Cys-12, Cys-49, Cys-83, Cys-157, Cys-161, and Cys-164. The region spanning 143–375 (RAEGPTAFVS…QQRINNQAAQ (233 aa)) is the Radical SAM core domain. The TRAM domain occupies 378-441 (RAMLGTEQRV…TNSLRGEVVR (64 aa)).

Belongs to the methylthiotransferase family. MiaB subfamily. In terms of assembly, monomer. [4Fe-4S] cluster is required as a cofactor.

Its subcellular location is the cytoplasm. The enzyme catalyses N(6)-dimethylallyladenosine(37) in tRNA + (sulfur carrier)-SH + AH2 + 2 S-adenosyl-L-methionine = 2-methylsulfanyl-N(6)-dimethylallyladenosine(37) in tRNA + (sulfur carrier)-H + 5'-deoxyadenosine + L-methionine + A + S-adenosyl-L-homocysteine + 2 H(+). Catalyzes the methylthiolation of N6-(dimethylallyl)adenosine (i(6)A), leading to the formation of 2-methylthio-N6-(dimethylallyl)adenosine (ms(2)i(6)A) at position 37 in tRNAs that read codons beginning with uridine. The polypeptide is tRNA-2-methylthio-N(6)-dimethylallyladenosine synthase (Histophilus somni (strain 129Pt) (Haemophilus somnus)).